A 427-amino-acid chain; its full sequence is 3-phosphoshikimate 1-carboxyvinyltransferase (427 aa).

Lysine 22, serine 23, and arginine 27 together coordinate 3-phosphoshikimate. A phosphoenolpyruvate-binding site is contributed by lysine 22. Phosphoenolpyruvate-binding residues include glycine 96 and arginine 124. Serine 169, serine 170, glutamine 171, serine 197, aspartate 313, asparagine 336, and lysine 340 together coordinate 3-phosphoshikimate. A phosphoenolpyruvate-binding site is contributed by glutamine 171. Aspartate 313 acts as the Proton acceptor in catalysis. 3 residues coordinate phosphoenolpyruvate: arginine 344, arginine 386, and lysine 411.

The protein belongs to the EPSP synthase family. As to quaternary structure, monomer.

The protein localises to the cytoplasm. It catalyses the reaction 3-phosphoshikimate + phosphoenolpyruvate = 5-O-(1-carboxyvinyl)-3-phosphoshikimate + phosphate. The protein operates within metabolic intermediate biosynthesis; chorismate biosynthesis; chorismate from D-erythrose 4-phosphate and phosphoenolpyruvate: step 6/7. Catalyzes the transfer of the enolpyruvyl moiety of phosphoenolpyruvate (PEP) to the 5-hydroxyl of shikimate-3-phosphate (S3P) to produce enolpyruvyl shikimate-3-phosphate and inorganic phosphate. The sequence is that of 3-phosphoshikimate 1-carboxyvinyltransferase from Escherichia coli O8 (strain IAI1).